A 213-amino-acid polypeptide reads, in one-letter code: Large ribosomal subunit protein uL3 (213 aa).

Residue glutamine 151 is modified to N5-methylglutamine.

The protein belongs to the universal ribosomal protein uL3 family. As to quaternary structure, part of the 50S ribosomal subunit. Forms a cluster with proteins L14 and L19. In terms of processing, methylated by PrmB.

In terms of biological role, one of the primary rRNA binding proteins, it binds directly near the 3'-end of the 23S rRNA, where it nucleates assembly of the 50S subunit. This Rhizobium etli (strain CIAT 652) protein is Large ribosomal subunit protein uL3.